The sequence spans 259 residues: Small ribosomal subunit protein eS1 (259 aa).

Disordered regions lie at residues 1-23 (MAVG…KTAD) and 235-259 (ESKS…VDSV). A compositionally biased stretch (basic residues) spans 8–19 (KVTKGGKKGGKK). A compositionally biased stretch (basic and acidic residues) spans 246-259 (SRPDHYEPPKVDSV).

Belongs to the eukaryotic ribosomal protein eS1 family. Component of the small ribosomal subunit. Mature ribosomes consist of a small (40S) and a large (60S) subunit. The 40S subunit contains about 33 different proteins and 1 molecule of RNA (18S). The 60S subunit contains about 49 different proteins and 3 molecules of RNA (28S, 5.8S and 5S).

The protein localises to the cytoplasm. This chain is Small ribosomal subunit protein eS1, found in Schistosoma japonicum (Blood fluke).